A 134-amino-acid polypeptide reads, in one-letter code: Large ribosomal subunit protein bL12 (134 aa).

Belongs to the bacterial ribosomal protein bL12 family. In terms of assembly, homodimer. Part of the ribosomal stalk of the 50S ribosomal subunit. Forms a multimeric L10(L12)X complex, where L10 forms an elongated spine to which 2 to 4 L12 dimers bind in a sequential fashion. Binds GTP-bound translation factors.

Forms part of the ribosomal stalk which helps the ribosome interact with GTP-bound translation factors. Is thus essential for accurate translation. This Chlamydia abortus (strain DSM 27085 / S26/3) (Chlamydophila abortus) protein is Large ribosomal subunit protein bL12.